Here is a 180-residue protein sequence, read N- to C-terminus: UPF0227 protein YcfP (180 aa).

It belongs to the UPF0227 family.

The protein is UPF0227 protein YcfP of Salmonella gallinarum (strain 287/91 / NCTC 13346).